The primary structure comprises 565 residues: NAD-dependent malic enzyme (565 aa).

Y104 (proton donor) is an active-site residue. Residue R157 coordinates NAD(+). K175 (proton acceptor) is an active-site residue. Residues E246, D247, and D270 each contribute to the a divalent metal cation site. D270 and N418 together coordinate NAD(+).

This sequence belongs to the malic enzymes family. Homotetramer. Mg(2+) is required as a cofactor. The cofactor is Mn(2+).

It carries out the reaction (S)-malate + NAD(+) = pyruvate + CO2 + NADH. The enzyme catalyses oxaloacetate + H(+) = pyruvate + CO2. The protein is NAD-dependent malic enzyme of Shigella flexneri serotype 5b (strain 8401).